We begin with the raw amino-acid sequence, 1275 residues long: Streptococcal hemoprotein receptor (1275 aa).

Positions 1 to 26 (MKKISKCAFVAISALVLIQATQTVKS) are cleaved as a signal peptide. The HID 1 stretch occupies residues 61–123 (GKEYYKHIEK…KKDGDILITF (63 aa)). Heme contacts are provided by Thr87, Arg196, Tyr197, and Met238. The tract at residues 203-269 (IKALTQQITK…KGFEDVTITV (67 aa)) is HID 2. The NEAT 1 domain occupies 369 to 501 (LTEGTYTLNF…DMTFSKTVTK (133 aa)). LRR repeat units lie at residues 544 to 567 (LEQIRGELRLDHYELTDISLLKHA), 568 to 590 (KNITELHLDGNQITEIPKELFSQ), 592 to 614 (KQLRFLNLRSNHLTYLDKDTFKS), 616 to 638 (AQLRELYLSSNFIHSLEGGLFQS), 639 to 662 (LHHLEQLDLSKNRIGRLCDNPFEG), 664 to 686 (SRLTSLGFAENSLEEIPEKALEP), 687 to 710 (LTSLNFIDLSQNNLALLPKTIEKL), 712 to 733 (ALSTIVASRNHITRIDNISFKN), 734 to 757 (LPKLSVLDLSTNEISNLPNGIFKQ), 759 to 781 (NQLTKLDFFNNLLTQVEESVFPD), and 783 to 804 (ETLNLDVKFNQIKSVSPKVRAL). Residues 976–1138 (LRDGIYYLNA…TTEKAKVVKE (163 aa)) form the NEAT 2 domain. 3 disordered regions span residues 1137–1174 (KETNNPQENSHLTSTDQLKGPQNRQQEKTPTSPPSAAT), 1186–1205 (KATGQSTQETSKTDDTDKAE), and 1210–1248 (LVRDHQTSIEGKTAKDTKTKKSDKKHRSNQQSNGEESSS). Over residues 1138–1166 (ETNNPQENSHLTSTDQLKGPQNRQQEKTP) the composition is skewed to polar residues. Composition is skewed to basic and acidic residues over residues 1196–1205 (SKTDDTDKAE) and 1210–1229 (LVRDHQTSIEGKTAKDTKTK). Residues 1250–1269 (YHLIAGLSSFMIVALGFIIG) traverse the membrane as a helical segment.

It localises to the cell membrane. With respect to regulation, may modulate heme uptake according to heme availability. In the presence of high heme concentrations, NEAT 1 facilitates fast heme delivery to Shp, whereas NEAT 2 serves as a temporary storage for heme on the bacterial surface. When heme availability is limiting, heme from NEAT 2 is transferred back to NEAT 1 and from there to Shp. Functionally, hemoprotein receptor that plays a central role in the acquisition of host heme, a source of iron during bacterial infection, and is therefore an important virulence factor. Captures host hemoproteins and their iron-containing heme molecules, and transfers the heme to the cell surface heme-binding protein Shp. Plays a pivotal role in iron acquisition and growth under iron-starvation conditions. Uses a cap and release mechanism in which Shr forms a dynamic complex with hemoglobin that enables the gated release of its most labile heme molecule. This mechanism exploits the hemoglobin beta subunit's inherent weaker affinity for heme, allowing S.pyogenes to preferentially capture only heme-saturated forms of hemoglobin that contain iron. In vitro, binds directly to a variety of heme-containing proteins, including hemoglobin, myoglobin, heme albumin and the hemoglobin-haptoglobin complex. It also binds to and acquires heme from methemoglobin, the ferric form of hemoglobin, which is likely to be a physiologically relevant heme source for the hemolytic group A streptococcus (GAS). Seems to have an inherent ability to reduce the ferric heme present in methemoglobin to ferrous heme and to provide a stable environment for the produced ferrous complex. Does not bind apohemoglobin, apohaptoglobin, fibrinogen or streptavidin, indicating that it specifically recognizes hemoproteins. In addition to its role in heme acquisition, functions as an adhesin, contributing to host cell adhesion and hence virulence. Specifically binds to extracellular matrix (ECM) components, including fibronectin and laminin, and mediates bacterial attachment to host epithelial cells. This chain is Streptococcal hemoprotein receptor, found in Streptococcus pyogenes serotype M1.